The following is a 340-amino-acid chain: Putative UPF0607 protein ENSP00000332738 (340 aa).

The span at 75 to 90 shows a compositional bias: basic and acidic residues; the sequence is VRAEEPKEATEVKDQV. 2 disordered regions span residues 75-130 and 215-281; these read VRAE…NPRP and GLLM…KLPC. The segment covering 91–126 has biased composition (polar residues); sequence ETQGQEDNKTGPCSNGKAASTSRPLETQGNLTSSWY. Positions 228–241 are enriched in low complexity; that stretch reads PAALRSSRSSPPRA. Basic residues predominate over residues 242 to 251; that stretch reads AGHRPRKRKL. The span at 254-266 shows a compositional bias: low complexity; it reads PPLQLQQTPPLQL.

It belongs to the UPF0607 family.

This Homo sapiens (Human) protein is Putative UPF0607 protein ENSP00000332738.